The primary structure comprises 62 residues: Photosystem II reaction center protein Z (62 aa).

Transmembrane regions (helical) follow at residues 8–28 (AVFA…VVFA) and 41–61 (FSGT…NSLI).

This sequence belongs to the PsbZ family. As to quaternary structure, PSII is composed of 1 copy each of membrane proteins PsbA, PsbB, PsbC, PsbD, PsbE, PsbF, PsbH, PsbI, PsbJ, PsbK, PsbL, PsbM, PsbT, PsbY, PsbZ, Psb30/Ycf12, at least 3 peripheral proteins of the oxygen-evolving complex and a large number of cofactors. It forms dimeric complexes.

It localises to the plastid. The protein resides in the chloroplast thylakoid membrane. Its function is as follows. May control the interaction of photosystem II (PSII) cores with the light-harvesting antenna, regulates electron flow through the 2 photosystem reaction centers. PSII is a light-driven water plastoquinone oxidoreductase, using light energy to abstract electrons from H(2)O, generating a proton gradient subsequently used for ATP formation. In Cucumis sativus (Cucumber), this protein is Photosystem II reaction center protein Z.